The chain runs to 242 residues: Purine nucleoside phosphorylase PA4543 (242 aa).

Zn(2+) contacts are provided by His69, Cys103, and His120.

The protein belongs to the purine nucleoside phosphorylase YfiH/LACC1 family. In terms of assembly, homodimer. Requires Cu(2+) as cofactor. The cofactor is Zn(2+).

The catalysed reaction is adenosine + phosphate = alpha-D-ribose 1-phosphate + adenine. It catalyses the reaction S-methyl-5'-thioadenosine + phosphate = 5-(methylsulfanyl)-alpha-D-ribose 1-phosphate + adenine. It carries out the reaction inosine + phosphate = alpha-D-ribose 1-phosphate + hypoxanthine. The enzyme catalyses adenosine + H2O + H(+) = inosine + NH4(+). Functionally, purine nucleoside enzyme that catalyzes the phosphorolysis of adenosine and inosine nucleosides, yielding D-ribose 1-phosphate and the respective free bases, adenine and hypoxanthine. Also catalyzes the phosphorolysis of S-methyl-5'-thioadenosine into adenine and S-methyl-5-thio-alpha-D-ribose 1-phosphate. Also has adenosine deaminase activity. The polypeptide is Purine nucleoside phosphorylase PA4543 (Pseudomonas aeruginosa (strain ATCC 15692 / DSM 22644 / CIP 104116 / JCM 14847 / LMG 12228 / 1C / PRS 101 / PAO1)).